The following is a 540-amino-acid chain: DNA topoisomerase 1 (540 aa).

The Toprim domain maps to 1 to 110; the sequence is MELFIVESPT…NIKRAVFYEI (110 aa). E7 and D79 together coordinate Mg(2+). The Topo IA-type catalytic domain maps to 126 to 536; it reads NMNLVYAQFA…FMEKIFGKEL (411 aa). Residues 161 to 166 form an interaction with DNA region; it reads SAGRVQ. Y281 acts as the O-(5'-phospho-DNA)-tyrosine intermediate in catalysis.

The protein belongs to the type IA topoisomerase family. Monomer. Mg(2+) serves as cofactor.

It catalyses the reaction ATP-independent breakage of single-stranded DNA, followed by passage and rejoining.. In terms of biological role, releases the supercoiling and torsional tension of DNA, which is introduced during the DNA replication and transcription, by transiently cleaving and rejoining one strand of the DNA duplex. Introduces a single-strand break via transesterification at a target site in duplex DNA. The scissile phosphodiester is attacked by the catalytic tyrosine of the enzyme, resulting in the formation of a DNA-(5'-phosphotyrosyl)-enzyme intermediate and the expulsion of a 3'-OH DNA strand. The free DNA strand then undergoes passage around the unbroken strand, thus removing DNA supercoils. Finally, in the religation step, the DNA 3'-OH attacks the covalent intermediate to expel the active-site tyrosine and restore the DNA phosphodiester backbone. The chain is DNA topoisomerase 1 from Aquifex aeolicus (strain VF5).